The primary structure comprises 73 residues: Protein SlyX homolog (73 aa).

This sequence belongs to the SlyX family.

This is Protein SlyX homolog from Histophilus somni (strain 2336) (Haemophilus somnus).